Here is a 291-residue protein sequence, read N- to C-terminus: Small ribosomal subunit biogenesis GTPase RsgA (291 aa).

The CP-type G domain maps to 63–221 (KNELKRPPVS…IADTPGFSAL (159 aa)). GTP contacts are provided by residues 112–115 (TKKD) and 164–172 (GQSGVGKST). Positions 245, 250, 252, and 258 each coordinate Zn(2+).

Belongs to the TRAFAC class YlqF/YawG GTPase family. RsgA subfamily. Monomer. Associates with 30S ribosomal subunit, binds 16S rRNA. It depends on Zn(2+) as a cofactor.

It localises to the cytoplasm. One of several proteins that assist in the late maturation steps of the functional core of the 30S ribosomal subunit. Helps release RbfA from mature subunits. May play a role in the assembly of ribosomal proteins into the subunit. Circularly permuted GTPase that catalyzes slow GTP hydrolysis, GTPase activity is stimulated by the 30S ribosomal subunit. This chain is Small ribosomal subunit biogenesis GTPase RsgA, found in Staphylococcus aureus (strain MRSA252).